We begin with the raw amino-acid sequence, 29 residues long: Cytochrome b6-f complex subunit 8 (29 aa).

Residues 3–23 (ILALGWVSVLALFTWSIAMVV) form a helical membrane-spanning segment.

It belongs to the PetN family. In terms of assembly, the 4 large subunits of the cytochrome b6-f complex are cytochrome b6, subunit IV (17 kDa polypeptide, PetD), cytochrome f and the Rieske protein, while the 4 small subunits are PetG, PetL, PetM and PetN. The complex functions as a dimer.

It is found in the cellular thylakoid membrane. Its function is as follows. Component of the cytochrome b6-f complex, which mediates electron transfer between photosystem II (PSII) and photosystem I (PSI), cyclic electron flow around PSI, and state transitions. In Gloeothece citriformis (strain PCC 7424) (Cyanothece sp. (strain PCC 7424)), this protein is Cytochrome b6-f complex subunit 8.